Consider the following 465-residue polypeptide: Glycine-rich cell wall structural protein 1.8 (465 aa).

Residues 1–30 (MATIHRLPSLVFLVLLALGVCSARRALLTL) form the signal peptide. Repeat copies occupy residues 205-226 (HGGG…AGGE), 227-248 (HGGG…AGGE), 249-270 (HGGG…AGGE), 271-292 (HGGG…AGGE), 293-314 (HGGG…AGGE), 315-336 (HGGG…AVGE), 337-358 (HGGG…TGGE), and 359-380 (HGGG…TGGE). Positions 205-380 (HGGGGGGGQG…AGGGYGTGGE (176 aa)) are 8 X 22 AA tandem repeats of H-G-G-G-[GAY]-G-G-G-Q-G-G-G-[AD]-G-G-G-Y-[GA]-[AT]-[GV]-G-E.

In terms of tissue distribution, expressed in young hypocotyls.

The protein localises to the secreted. It localises to the cell wall. In terms of biological role, responsible for plasticity of the cell wall. The polypeptide is Glycine-rich cell wall structural protein 1.8 (Phaseolus vulgaris (Kidney bean)).